The sequence spans 907 residues: Translation initiation factor IF-2 (907 aa).

Positions 26–317 (DAGMKKSSSD…KPKSMQHGFD (292 aa)) are disordered. 2 stretches are compositionally biased toward basic and acidic residues: residues 28–44 (GMKKSSSDQVSDEEKQK) and 101–248 (SAIE…DTDY). Over residues 299 to 308 (KGGRKGKLSK) the composition is skewed to basic residues. One can recognise a tr-type G domain in the interval 406–575 (PRAPVVTIMG…LLQAEVLELT (170 aa)). A G1 region spans residues 415-422 (GHVDHGKT). A GTP-binding site is contributed by 415-422 (GHVDHGKT). The G2 stretch occupies residues 440-444 (GITQH). Residues 461-464 (DTPG) are G3. Residues 461–465 (DTPGH) and 515–518 (NKID) each bind GTP. Positions 515–518 (NKID) are G4. Residues 551-553 (SAK) form a G5 region.

It belongs to the TRAFAC class translation factor GTPase superfamily. Classic translation factor GTPase family. IF-2 subfamily.

The protein resides in the cytoplasm. In terms of biological role, one of the essential components for the initiation of protein synthesis. Protects formylmethionyl-tRNA from spontaneous hydrolysis and promotes its binding to the 30S ribosomal subunits. Also involved in the hydrolysis of GTP during the formation of the 70S ribosomal complex. The chain is Translation initiation factor IF-2 from Vibrio vulnificus (strain YJ016).